A 32-amino-acid chain; its full sequence is DECFSPGTFCGTKPGLCCSARCFSFFCISLEF.

3 cysteine pairs are disulfide-bonded: C3/C18, C10/C22, and C17/C27. P6 and P14 each carry 4-hydroxyproline.

This sequence belongs to the conotoxin O1 superfamily. In terms of tissue distribution, expressed by the venom duct.

Its subcellular location is the secreted. Functionally, delta-conotoxins bind to site 6 of voltage-gated sodium channels (Nav) and inhibit the inactivation process. This toxin acts on Nav1.4/SCN4A and Nav1.6/SCN8A (EC(50)=2.3 uM). This Conus consors (Singed cone) protein is Delta-conotoxin-like CnVIB.